The primary structure comprises 209 residues: Uracil phosphoribosyltransferase (209 aa).

5-phospho-alpha-D-ribose 1-diphosphate-binding positions include arginine 79, arginine 104, and 131-139 (DPMLATGGS). Uracil is bound by residues isoleucine 194 and 199–201 (GDA). 5-phospho-alpha-D-ribose 1-diphosphate is bound at residue aspartate 200.

The protein belongs to the UPRTase family. It depends on Mg(2+) as a cofactor.

The enzyme catalyses UMP + diphosphate = 5-phospho-alpha-D-ribose 1-diphosphate + uracil. The protein operates within pyrimidine metabolism; UMP biosynthesis via salvage pathway; UMP from uracil: step 1/1. Its activity is regulated as follows. Allosterically activated by GTP. In terms of biological role, catalyzes the conversion of uracil and 5-phospho-alpha-D-ribose 1-diphosphate (PRPP) to UMP and diphosphate. The chain is Uracil phosphoribosyltransferase from Clostridium tetani (strain Massachusetts / E88).